We begin with the raw amino-acid sequence, 407 residues long: Multifunctional CCA protein (407 aa).

ATP is bound by residues Gly-8 and Arg-11. Residues Gly-8 and Arg-11 each coordinate CTP. Residues Asp-21 and Asp-23 each coordinate Mg(2+). 3 residues coordinate ATP: Arg-91, Arg-137, and Arg-140. Residues Arg-91, Arg-137, and Arg-140 each contribute to the CTP site. In terms of domain architecture, HD spans 228 to 329 (TGIHTLLVAE…VKIFNKLDVW (102 aa)).

This sequence belongs to the tRNA nucleotidyltransferase/poly(A) polymerase family. Bacterial CCA-adding enzyme type 1 subfamily. As to quaternary structure, monomer. Can also form homodimers and oligomers. The cofactor is Mg(2+). Ni(2+) is required as a cofactor.

The enzyme catalyses a tRNA precursor + 2 CTP + ATP = a tRNA with a 3' CCA end + 3 diphosphate. It carries out the reaction a tRNA with a 3' CCA end + 2 CTP + ATP = a tRNA with a 3' CCACCA end + 3 diphosphate. Catalyzes the addition and repair of the essential 3'-terminal CCA sequence in tRNAs without using a nucleic acid template. Adds these three nucleotides in the order of C, C, and A to the tRNA nucleotide-73, using CTP and ATP as substrates and producing inorganic pyrophosphate. tRNA 3'-terminal CCA addition is required both for tRNA processing and repair. Also involved in tRNA surveillance by mediating tandem CCA addition to generate a CCACCA at the 3' terminus of unstable tRNAs. While stable tRNAs receive only 3'-terminal CCA, unstable tRNAs are marked with CCACCA and rapidly degraded. The chain is Multifunctional CCA protein from Vibrio vulnificus (strain YJ016).